The primary structure comprises 187 residues: Large ribosomal subunit protein uL22 (187 aa).

Basic and acidic residues predominate over residues 159-171; that stretch reads VSKPTDDAAPKVK. The disordered stretch occupies residues 159 to 187; sequence VSKPTDDAAPKVKKESKRKQRRQLARGEF. Over residues 172 to 187 the composition is skewed to basic residues; it reads KESKRKQRRQLARGEF.

The protein belongs to the universal ribosomal protein uL22 family.

The protein is Large ribosomal subunit protein uL22 (rpl-17) of Caenorhabditis elegans.